Here is a 615-residue protein sequence, read N- to C-terminus: Angiotensin-converting enzyme (615 aa).

Residues 1 to 17 (MRLFLLALLATLAVTQA) form the signal peptide. Residues 19-607 (VKEEIQAKEY…IKNNVHIGWT (589 aa)) enclose the Peptidase M2 domain. N53 is a glycosylation site (N-linked (GlcNAc...) asparagine). The cysteines at positions 133 and 141 are disulfide-linked. N-linked (GlcNAc...) asparagine glycans are attached at residues N196 and N311. A disulfide bridge connects residues C336 and C354. H367 serves as a coordination point for Zn(2+). Catalysis depends on E368, which acts as the Proton acceptor. Residues H371 and E395 each coordinate Zn(2+). The Proton donor role is filled by H497. C522 and C540 are oxidised to a cystine.

The protein belongs to the peptidase M2 family. It depends on Zn(2+) as a cofactor. Glycosylated. As to expression, expressed in vesicular structures in spermatocytes and early spermatids (at protein level).

Its subcellular location is the secreted. The protein resides in the extracellular space. It catalyses the reaction Release of a C-terminal dipeptide, oligopeptide-|-Xaa-Yaa, when Xaa is not Pro, and Yaa is neither Asp nor Glu. Thus, conversion of angiotensin I to angiotensin II, with increase in vasoconstrictor activity, but no action on angiotensin II.. Its activity is regulated as follows. Inhibited by captopril and, to a lesser extent, by lisinopril, trandolaprilat, fosinoprilat and enalaprilat. In terms of biological role, may be involved in the specific maturation or degradation of a number of bioactive peptides. May play a role in the contractions of the heart, gut and testes, and in spermatid differentiation. This chain is Angiotensin-converting enzyme (Ance), found in Drosophila melanogaster (Fruit fly).